The chain runs to 181 residues: Peptidyl-tRNA hydrolase (181 aa).

Tyr14 is a tRNA binding site. Residue His19 is the Proton acceptor of the active site. TRNA is bound by residues Tyr62, Asn64, and Asn108.

The protein belongs to the PTH family. Monomer.

The protein resides in the cytoplasm. It catalyses the reaction an N-acyl-L-alpha-aminoacyl-tRNA + H2O = an N-acyl-L-amino acid + a tRNA + H(+). In terms of biological role, hydrolyzes ribosome-free peptidyl-tRNAs (with 1 or more amino acids incorporated), which drop off the ribosome during protein synthesis, or as a result of ribosome stalling. Functionally, catalyzes the release of premature peptidyl moieties from peptidyl-tRNA molecules trapped in stalled 50S ribosomal subunits, and thus maintains levels of free tRNAs and 50S ribosomes. The chain is Peptidyl-tRNA hydrolase from Campylobacter jejuni subsp. jejuni serotype O:23/36 (strain 81-176).